Reading from the N-terminus, the 361-residue chain is Chorismate synthase (361 aa).

Residues R48 and R54 each contribute to the NADP(+) site. Residues 131-133 (RSS), 243-244 (NA), G287, 302-306 (KPTSS), and R328 each bind FMN.

It belongs to the chorismate synthase family. Homotetramer. Requires FMNH2 as cofactor.

The enzyme catalyses 5-O-(1-carboxyvinyl)-3-phosphoshikimate = chorismate + phosphate. Its pathway is metabolic intermediate biosynthesis; chorismate biosynthesis; chorismate from D-erythrose 4-phosphate and phosphoenolpyruvate: step 7/7. In terms of biological role, catalyzes the anti-1,4-elimination of the C-3 phosphate and the C-6 proR hydrogen from 5-enolpyruvylshikimate-3-phosphate (EPSP) to yield chorismate, which is the branch point compound that serves as the starting substrate for the three terminal pathways of aromatic amino acid biosynthesis. This reaction introduces a second double bond into the aromatic ring system. The sequence is that of Chorismate synthase from Bradyrhizobium sp. (strain BTAi1 / ATCC BAA-1182).